We begin with the raw amino-acid sequence, 186 residues long: MSDNDTRPTDAEVEAELKGVPEDMIDRTSDNDELAKLREELETARQDVLYAKAETQNVRRRMEKDVADARAYAATGFARDILSVADNLSRALESIPADLREDDKFKNLVAGLEATGREIEKVFSSHGIVRIAAMGLPLDPHQHQAMIEMPSADAEPGTVIQELQAGYMIKDRLLRPAMVAVAKKPD.

The protein belongs to the GrpE family. Homodimer.

Its subcellular location is the cytoplasm. In terms of biological role, participates actively in the response to hyperosmotic and heat shock by preventing the aggregation of stress-denatured proteins, in association with DnaK and GrpE. It is the nucleotide exchange factor for DnaK and may function as a thermosensor. Unfolded proteins bind initially to DnaJ; upon interaction with the DnaJ-bound protein, DnaK hydrolyzes its bound ATP, resulting in the formation of a stable complex. GrpE releases ADP from DnaK; ATP binding to DnaK triggers the release of the substrate protein, thus completing the reaction cycle. Several rounds of ATP-dependent interactions between DnaJ, DnaK and GrpE are required for fully efficient folding. The chain is Protein GrpE from Novosphingobium aromaticivorans (strain ATCC 700278 / DSM 12444 / CCUG 56034 / CIP 105152 / NBRC 16084 / F199).